Here is a 138-residue protein sequence, read N- to C-terminus: Acidic phospholipase A2 Cvv-E6f (138 aa).

An N-terminal signal peptide occupies residues 1-16 (MRTLWIVAVLLLGVEG). 7 cysteine pairs are disulfide-bonded: Cys-42/Cys-131, Cys-44/Cys-60, Cys-59/Cys-111, Cys-65/Cys-138, Cys-66/Cys-104, Cys-73/Cys-97, and Cys-91/Cys-102. Ca(2+) contacts are provided by Tyr-43, Gly-45, and Gly-47. Residue His-63 is part of the active site. Position 64 (Asp-64) interacts with Ca(2+). Asp-105 is a catalytic residue.

Requires Ca(2+) as cofactor. As to expression, expressed by the venom gland.

The protein localises to the secreted. The enzyme catalyses a 1,2-diacyl-sn-glycero-3-phosphocholine + H2O = a 1-acyl-sn-glycero-3-phosphocholine + a fatty acid + H(+). Its function is as follows. Snake venom phospholipase A2 (PLA2) that shows very low inhibition of ADP-induced platelet aggregation in platelet-rich plasma of human, rabbit and guinea pig. In vivo, shows efficient edema-inducing activities in rat paws. PLA2 catalyzes the calcium-dependent hydrolysis of the 2-acyl groups in 3-sn-phosphoglycerides. The protein is Acidic phospholipase A2 Cvv-E6f of Crotalus viridis viridis (Prairie rattlesnake).